A 152-amino-acid chain; its full sequence is MSINIKAVTDDNRAAILDLHVSQNQLSYIESTKVCLEDAKECHYYKPVGLYYEGDLVGFAMYGLFPEYDEDNKNGRVWLDRFFIDKHYQGKGLGKKMLKALIQHLAELYKCKRIYLSIFENNIHAIRLYQRFGFQFNGELDFNGEKVMVKEL.

The N-acetyltransferase domain occupies Ile3–Leu152. Acetyl-CoA contacts are provided by residues Phe82 to Ile84, Gln89 to Lys95, and Asn122 to Arg131. The active-site Proton donor is Tyr129.

The protein belongs to the acetyltransferase family.

It catalyses the reaction an alkane-alpha,omega-diamine + acetyl-CoA = an N-acetylalkane-alpha,omega-diamine + CoA + H(+). The catalysed reaction is spermine + acetyl-CoA = N(1)-acetylspermine + CoA + H(+). Its pathway is amine and polyamine degradation; spermine degradation. Functionally, probably acetylates spermine to N(1)-acetylspermine. In Bacillus subtilis subsp. natto (strain BEST195), this protein is Probable spermine N(1)-acetyltransferase.